The sequence spans 341 residues: Ketol-acid reductoisomerase (NADP(+)) (341 aa).

A KARI N-terminal Rossmann domain is found at 1–182 (MTEMFYDDDA…GGTRAGVIKT (182 aa)). NADP(+) contacts are provided by residues 25 to 28 (YGSQ), lysine 48, serine 51, serine 53, and 83 to 86 (DQHQ). Histidine 108 is an active-site residue. An NADP(+)-binding site is contributed by glycine 134. Residues 183 to 328 (TFTEETETDL…RELRSLFSWQ (146 aa)) enclose the KARI C-terminal knotted domain. The Mg(2+) site is built by aspartate 191, glutamate 195, glutamate 227, and glutamate 231. Serine 252 serves as a coordination point for substrate.

This sequence belongs to the ketol-acid reductoisomerase family. Mg(2+) serves as cofactor.

It carries out the reaction (2R)-2,3-dihydroxy-3-methylbutanoate + NADP(+) = (2S)-2-acetolactate + NADPH + H(+). It catalyses the reaction (2R,3R)-2,3-dihydroxy-3-methylpentanoate + NADP(+) = (S)-2-ethyl-2-hydroxy-3-oxobutanoate + NADPH + H(+). Its pathway is amino-acid biosynthesis; L-isoleucine biosynthesis; L-isoleucine from 2-oxobutanoate: step 2/4. The protein operates within amino-acid biosynthesis; L-valine biosynthesis; L-valine from pyruvate: step 2/4. Involved in the biosynthesis of branched-chain amino acids (BCAA). Catalyzes an alkyl-migration followed by a ketol-acid reduction of (S)-2-acetolactate (S2AL) to yield (R)-2,3-dihydroxy-isovalerate. In the isomerase reaction, S2AL is rearranged via a Mg-dependent methyl migration to produce 3-hydroxy-3-methyl-2-ketobutyrate (HMKB). In the reductase reaction, this 2-ketoacid undergoes a metal-dependent reduction by NADPH to yield (R)-2,3-dihydroxy-isovalerate. This is Ketol-acid reductoisomerase (NADP(+)) from Pseudarthrobacter chlorophenolicus (strain ATCC 700700 / DSM 12829 / CIP 107037 / JCM 12360 / KCTC 9906 / NCIMB 13794 / A6) (Arthrobacter chlorophenolicus).